The chain runs to 236 residues: Small ribosomal subunit protein uS2 (236 aa).

This sequence belongs to the universal ribosomal protein uS2 family.

The sequence is that of Small ribosomal subunit protein uS2 from Brevibacillus brevis (strain 47 / JCM 6285 / NBRC 100599).